Consider the following 369-residue polypeptide: Deoxyhypusine synthase (369 aa).

NAD(+)-binding positions include 105 to 109 (SNLIS), 131 to 133 (TAG), Glu137, and Asp238. 136–137 (EE) is a spermidine binding site. Asp243 is a spermidine binding site. Residue Gly283 participates in NAD(+) binding. His288 contacts spermidine. Residue 308–309 (TA) participates in NAD(+) binding. Spermidine contacts are provided by residues 314–316 (GSD) and 323–329 (EAVSWGK). Catalysis depends on Lys329, which acts as the Nucleophile. An NAD(+)-binding site is contributed by 342-343 (DA).

This sequence belongs to the deoxyhypusine synthase family. It depends on NAD(+) as a cofactor.

It catalyses the reaction [eIF5A protein]-L-lysine + spermidine = [eIF5A protein]-deoxyhypusine + propane-1,3-diamine. It participates in protein modification; eIF5A hypusination. Catalyzes the NAD-dependent oxidative cleavage of spermidine and the subsequent transfer of the butylamine moiety of spermidine to the epsilon-amino group of a critical lysine residue of the eIF-5A precursor protein to form the intermediate deoxyhypusine residue. This is the first step of the post-translational modification of that lysine into an unusual amino acid residue named hypusine. Hypusination is unique to mature eIF-5A factor and is essential for its function. The polypeptide is Deoxyhypusine synthase (Dhps) (Rattus norvegicus (Rat)).